Consider the following 910-residue polypeptide: Leucine--tRNA ligase (910 aa).

A 'HIGH' region motif is present at residues 50-60 (PYTNGSLHVGH). A 'KMSKS' region motif is present at residues 611–615 (KISKS). An ATP-binding site is contributed by Lys614.

Belongs to the class-I aminoacyl-tRNA synthetase family.

The protein resides in the cytoplasm. It carries out the reaction tRNA(Leu) + L-leucine + ATP = L-leucyl-tRNA(Leu) + AMP + diphosphate. The protein is Leucine--tRNA ligase of Thermoplasma acidophilum (strain ATCC 25905 / DSM 1728 / JCM 9062 / NBRC 15155 / AMRC-C165).